The chain runs to 252 residues: Triosephosphate isomerase (252 aa).

9–11 serves as a coordination point for substrate; that stretch reads NWK. H95 functions as the Electrophile in the catalytic mechanism. The active-site Proton acceptor is the E167. Residues G173, S213, and 234 to 235 each bind substrate; that span reads GG. The residue at position 213 (S213) is a Phosphoserine.

This sequence belongs to the triosephosphate isomerase family. Homodimer.

The protein localises to the cytoplasm. The enzyme catalyses D-glyceraldehyde 3-phosphate = dihydroxyacetone phosphate. It participates in carbohydrate biosynthesis; gluconeogenesis. It functions in the pathway carbohydrate degradation; glycolysis; D-glyceraldehyde 3-phosphate from glycerone phosphate: step 1/1. Functionally, involved in the gluconeogenesis. Catalyzes stereospecifically the conversion of dihydroxyacetone phosphate (DHAP) to D-glyceraldehyde-3-phosphate (G3P). The chain is Triosephosphate isomerase from Oceanobacillus iheyensis (strain DSM 14371 / CIP 107618 / JCM 11309 / KCTC 3954 / HTE831).